Reading from the N-terminus, the 493-residue chain is MTTVRTRIAPSPTGDPHVGTAYIALFNYCFAKQHGGEFILRIEDTDQLRSTRESEQQIFDALRWLGIDWSEGPDVGGPHGPYRQSERGDIYQKYCQQLVDMGHAFPCFCTAEELDQMRAEQMARGETPRYDGRALLLSKEEVARRLAAGEPHVIRMKVPSEGVCVVPDMLRGDVEIPWDRMDMQVLMKTDGLPTYFLANVVDDHLMGITHVLRGEEWLPSAPKLILLYEYFGWEQPELCYMPLLRNPDKSKLSKRKNPTSVTFYERMGFMPEAMLNYLGRMGWSMPDEREKFSLQEMVDNFDLKRVSLGGPIFDIEKLSWLNGQWLRDLPVEEFAARVQKWAFNSEYMMKIAPHVQGRVETFSQVAPLAGFFFAGGVNPDAKLFESKKLSGDQVRQLMQLILWKLESLRQWEKDSITATIQAVVESLELKLRDAMPLMFAAITGQASSVSVLDAMEILGPDLTRFRLRQAIDLLGGVSKKENKEWEKLLGAIA.

A 'HIGH' region motif is present at residues 10 to 20; it reads PSPTGDPHVGT. A 'KMSKS' region motif is present at residues 251 to 255; it reads KLSKR. Residue Lys254 coordinates ATP.

Belongs to the class-I aminoacyl-tRNA synthetase family. Glutamate--tRNA ligase type 1 subfamily. Monomer.

The protein resides in the cytoplasm. The enzyme catalyses tRNA(Glu) + L-glutamate + ATP = L-glutamyl-tRNA(Glu) + AMP + diphosphate. Catalyzes the attachment of glutamate to tRNA(Glu) in a two-step reaction: glutamate is first activated by ATP to form Glu-AMP and then transferred to the acceptor end of tRNA(Glu). The protein is Glutamate--tRNA ligase of Pseudomonas fluorescens (strain Pf0-1).